The sequence spans 449 residues: Naphthalene 1,2-dioxygenase system, large oxygenase component (449 aa).

Residues 39–137 form the Rieske domain; sequence WLFLTHDSLI…LNKKCLGLKE (99 aa). The [2Fe-2S] cluster site is built by Cys-81, His-83, Cys-101, and His-104. Fe cation is bound by residues His-208, His-213, and Asp-362.

The protein belongs to the bacterial ring-hydroxylating dioxygenase alpha subunit family. The naphthalene dioxygenase (NDO) multicomponent enzyme system is composed of an electron transfer component and a dioxygenase component (iron sulfur protein (ISP)). The electron transfer component is composed of a ferredoxin reductase (NdoR) and a ferredoxin (NdoA), and the dioxygenase component is formed of a heterohexamer (trimer of heterodimers) of three large alpha subunits (NdoB) and three small beta subunits (NdoC). Requires [2Fe-2S] cluster as cofactor. The cofactor is Fe(2+).

It carries out the reaction naphthalene + NADH + O2 + H(+) = (1R,2S)-1,2-dihydronaphthalene-1,2-diol + NAD(+). The protein operates within aromatic compound metabolism; naphthalene degradation. Its function is as follows. Component of the naphthalene dioxygenase (NDO) multicomponent enzyme system which catalyzes the incorporation of both atoms of molecular oxygen into naphthalene to form cis-(1R,2S)-dihydroxy-1,2-dihydronaphthalene. The alpha subunit has a catalytic role in the holoenzyme. Also able to catalyze the cis-dihydroxylation of biphenyl and phenanthrene. The sequence is that of Naphthalene 1,2-dioxygenase system, large oxygenase component from Pseudomonas putida (Arthrobacter siderocapsulatus).